The following is a 318-amino-acid chain: HPr kinase/phosphorylase (318 aa).

Residues H146 and K167 contribute to the active site. 161 to 168 (GESGLGKS) contributes to the ATP binding site. S168 serves as a coordination point for Mg(2+). The Proton acceptor; for phosphorylation activity. Proton donor; for dephosphorylation activity role is filled by D185. Residues 209 to 218 (LEVRGIGLLD) form an important for the catalytic mechanism of both phosphorylation and dephosphorylation region. E210 is a binding site for Mg(2+). Residue R252 is part of the active site. An important for the catalytic mechanism of dephosphorylation region spans residues 273–278 (QVVAGR).

It belongs to the HPrK/P family. As to quaternary structure, homohexamer. Requires Mg(2+) as cofactor.

It catalyses the reaction [HPr protein]-L-serine + ATP = [HPr protein]-O-phospho-L-serine + ADP + H(+). The enzyme catalyses [HPr protein]-O-phospho-L-serine + phosphate + H(+) = [HPr protein]-L-serine + diphosphate. Functionally, catalyzes the ATP- as well as the pyrophosphate-dependent phosphorylation of a specific serine residue in HPr, a phosphocarrier protein of the phosphoenolpyruvate-dependent sugar phosphotransferase system (PTS). HprK/P also catalyzes the pyrophosphate-producing, inorganic phosphate-dependent dephosphorylation (phosphorolysis) of seryl-phosphorylated HPr (P-Ser-HPr). This is HPr kinase/phosphorylase from Verminephrobacter eiseniae (strain EF01-2).